We begin with the raw amino-acid sequence, 152 residues long: Probable ribose-5-phosphate isomerase B (152 aa).

Residue 10–11 coordinates D-ribulose 5-phosphate; that stretch reads DH. Catalysis depends on cysteine 69, which acts as the Proton acceptor. 70 to 74 provides a ligand contact to D-ribulose 5-phosphate; it reads GTGVG. The active-site Proton donor is the histidine 102. The D-ribulose 5-phosphate site is built by aspartate 103, arginine 113, arginine 136, and arginine 140.

This sequence belongs to the LacAB/RpiB family. In terms of assembly, homodimer.

It carries out the reaction aldehydo-D-ribose 5-phosphate = D-ribulose 5-phosphate. Its pathway is carbohydrate degradation; pentose phosphate pathway; D-ribose 5-phosphate from D-ribulose 5-phosphate (non-oxidative stage): step 1/1. Catalyzes the interconversion of ribulose-5-P and ribose-5-P. This chain is Probable ribose-5-phosphate isomerase B, found in Mycoplasma genitalium (strain ATCC 33530 / DSM 19775 / NCTC 10195 / G37) (Mycoplasmoides genitalium).